A 171-amino-acid polypeptide reads, in one-letter code: uncharacterized protein (171 aa).

One can recognise a PfpI endopeptidase domain in the interval Lys3 to Gln171.

Belongs to the peptidase C56 family.

This is an uncharacterized protein from Staphylococcus aureus (strain COL).